Here is a 247-residue protein sequence, read N- to C-terminus: Aliphatic sulfonates import ATP-binding protein SsuB 2 (247 aa).

In terms of domain architecture, ABC transporter spans 28–242; the sequence is VSVRGLQRRY…ALRPILLEEL (215 aa). Residue 60 to 67 coordinates ATP; the sequence is GESGCGKT.

Belongs to the ABC transporter superfamily. Aliphatic sulfonates importer (TC 3.A.1.17.2) family. As to quaternary structure, the complex is composed of two ATP-binding proteins (SsuB), two transmembrane proteins (SsuC) and a solute-binding protein (SsuA).

The protein localises to the cell inner membrane. It catalyses the reaction ATP + H2O + aliphatic sulfonate-[sulfonate-binding protein]Side 1 = ADP + phosphate + aliphatic sulfonateSide 2 + [sulfonate-binding protein]Side 1.. Part of the ABC transporter complex SsuABC involved in aliphatic sulfonates import. Responsible for energy coupling to the transport system. The chain is Aliphatic sulfonates import ATP-binding protein SsuB 2 from Paraburkholderia xenovorans (strain LB400).